The primary structure comprises 433 residues: Trigger factor (433 aa).

The PPIase FKBP-type domain maps to 161 to 246 (GDRVTMDFVG…AKKVEARDLP (86 aa)).

The protein belongs to the FKBP-type PPIase family. Tig subfamily.

Its subcellular location is the cytoplasm. It carries out the reaction [protein]-peptidylproline (omega=180) = [protein]-peptidylproline (omega=0). Its function is as follows. Involved in protein export. Acts as a chaperone by maintaining the newly synthesized protein in an open conformation. Functions as a peptidyl-prolyl cis-trans isomerase. This is Trigger factor from Idiomarina loihiensis (strain ATCC BAA-735 / DSM 15497 / L2-TR).